Here is a 74-residue protein sequence, read N- to C-terminus: DNA-directed RNA polymerase subunit omega (74 aa).

It belongs to the RNA polymerase subunit omega family. As to quaternary structure, the RNAP catalytic core consists of 2 alpha, 1 beta/beta' and 1 omega subunit. When a sigma factor is associated with the core the holoenzyme is formed, which can initiate transcription.

The catalysed reaction is RNA(n) + a ribonucleoside 5'-triphosphate = RNA(n+1) + diphosphate. In terms of biological role, promotes RNA polymerase assembly. Latches the N- and C-terminal regions of the beta' subunit thereby facilitating its interaction with the beta and alpha subunits. The polypeptide is DNA-directed RNA polymerase subunit omega (Helicobacter hepaticus (strain ATCC 51449 / 3B1)).